Here is a 341-residue protein sequence, read N- to C-terminus: Phosphate acyltransferase (341 aa).

It belongs to the PlsX family. Homodimer. Probably interacts with PlsY.

The protein resides in the cytoplasm. It catalyses the reaction a fatty acyl-[ACP] + phosphate = an acyl phosphate + holo-[ACP]. The protein operates within lipid metabolism; phospholipid metabolism. Functionally, catalyzes the reversible formation of acyl-phosphate (acyl-PO(4)) from acyl-[acyl-carrier-protein] (acyl-ACP). This enzyme utilizes acyl-ACP as fatty acyl donor, but not acyl-CoA. This Vibrio campbellii (strain ATCC BAA-1116) protein is Phosphate acyltransferase.